A 345-amino-acid polypeptide reads, in one-letter code: S-adenosylmethionine:tRNA ribosyltransferase-isomerase (345 aa).

This sequence belongs to the QueA family. As to quaternary structure, monomer.

The protein resides in the cytoplasm. The enzyme catalyses 7-aminomethyl-7-carbaguanosine(34) in tRNA + S-adenosyl-L-methionine = epoxyqueuosine(34) in tRNA + adenine + L-methionine + 2 H(+). It functions in the pathway tRNA modification; tRNA-queuosine biosynthesis. Transfers and isomerizes the ribose moiety from AdoMet to the 7-aminomethyl group of 7-deazaguanine (preQ1-tRNA) to give epoxyqueuosine (oQ-tRNA). This Anaeromyxobacter dehalogenans (strain 2CP-C) protein is S-adenosylmethionine:tRNA ribosyltransferase-isomerase.